A 505-amino-acid chain; its full sequence is ATP synthase subunit beta (505 aa).

157–164 lines the ATP pocket; that stretch reads GGAGVGKT.

This sequence belongs to the ATPase alpha/beta chains family. In terms of assembly, F-type ATPases have 2 components, CF(1) - the catalytic core - and CF(0) - the membrane proton channel. CF(1) has five subunits: alpha(3), beta(3), gamma(1), delta(1), epsilon(1). CF(0) has three main subunits: a(1), b(2) and c(9-12). The alpha and beta chains form an alternating ring which encloses part of the gamma chain. CF(1) is attached to CF(0) by a central stalk formed by the gamma and epsilon chains, while a peripheral stalk is formed by the delta and b chains.

The protein localises to the cell inner membrane. The enzyme catalyses ATP + H2O + 4 H(+)(in) = ADP + phosphate + 5 H(+)(out). Its function is as follows. Produces ATP from ADP in the presence of a proton gradient across the membrane. The catalytic sites are hosted primarily by the beta subunits. The chain is ATP synthase subunit beta from Bacteroides fragilis (strain ATCC 25285 / DSM 2151 / CCUG 4856 / JCM 11019 / LMG 10263 / NCTC 9343 / Onslow / VPI 2553 / EN-2).